We begin with the raw amino-acid sequence, 867 residues long: Transcription factor E2F8 (867 aa).

The tract at residues Asp38–Thr58 is disordered. 2 positions are modified to phosphoserine: Ser71 and Ser102. 2 consecutive DNA-binding regions follow at residues Arg113 to Gly182 and Arg261 to Gly347. Disordered regions lie at residues Arg408 to Pro432, Gln532 to Lys616, and Ala771 to Val800. 2 positions are modified to phosphoserine: Ser413 and Ser417. Polar residues-rich tracts occupy residues Ser413–Pro432 and Gln532–Lys556. Over residues Asp557–Ala567 the composition is skewed to basic and acidic residues. The span at Asn568–Pro579 shows a compositional bias: polar residues. Basic and acidic residues predominate over residues Arg594 to Ser604. Over residues Ala775–Val800 the composition is skewed to polar residues.

Belongs to the E2F/DP family. Homodimer and heterodimer: mainly forms homodimers and, to a lesser extent, heterodimers with E2F8. Dimerization is important for DNA-binding. Interacts with HIF1A.

It localises to the nucleus. Its function is as follows. Atypical E2F transcription factor that participates in various processes such as angiogenesis and polyploidization of specialized cells. Mainly acts as a transcription repressor that binds DNA independently of DP proteins and specifically recognizes the E2 recognition site 5'-TTTC[CG]CGC-3'. Directly represses transcription of classical E2F transcription factors such as E2F1: component of a feedback loop in S phase by repressing the expression of E2F1, thereby preventing p53/TP53-dependent apoptosis. Plays a key role in polyploidization of cells in placenta and liver by regulating the endocycle, probably by repressing genes promoting cytokinesis and antagonizing action of classical E2F proteins (E2F1, E2F2 and/or E2F3). Required for placental development by promoting polyploidization of trophoblast giant cells. Acts as a promoter of sprouting angiogenesis, possibly by acting as a transcription activator: associates with HIF1A, recognizes and binds the VEGFA promoter, which is different from canonical E2 recognition site, and activates expression of the VEGFA gene. The protein is Transcription factor E2F8 (E2F8) of Homo sapiens (Human).